The following is a 65-amino-acid chain: 7 kDa A-type inclusion protein (65 aa).

The segment covering 1–20 (MSNQNIPQLSEYQTSVSQVA) has biased composition (polar residues). The segment at 1–32 (MSNQNIPQLSEYQTSVSQVAVTPPPKPKTPQI) is disordered.

In Bos taurus (Bovine), this protein is 7 kDa A-type inclusion protein.